The sequence spans 270 residues: UPF0354 protein Bcer98_3354 (270 aa).

It belongs to the UPF0354 family.

The chain is UPF0354 protein Bcer98_3354 from Bacillus cytotoxicus (strain DSM 22905 / CIP 110041 / 391-98 / NVH 391-98).